A 69-amino-acid chain; its full sequence is Sperm protamine P1 (69 aa).

The interval methionine 1 to lysine 69 is disordered. Basic residues-rich tracts occupy residues serine 7–valine 25 and arginine 34–asparagine 63.

The protein belongs to the protamine P1 family. Testis.

Its subcellular location is the nucleus. It localises to the chromosome. Its function is as follows. Protamines substitute for histones in the chromatin of sperm during the haploid phase of spermatogenesis. They compact sperm DNA into a highly condensed, stable and inactive complex. In Perameles gunnii (Eastern barred bandicoot), this protein is Sperm protamine P1 (PRM1).